We begin with the raw amino-acid sequence, 98 residues long: ESAT-6-like protein EsxK (98 aa).

The protein belongs to the WXG100 family. CFP-10 subfamily. In terms of assembly, strongly interacts with EsxL to form a heterodimeric complex under reducing conditions. The complex is regulated by the redox state of EsxL.

It localises to the secreted. This Mycobacterium tuberculosis (strain ATCC 25618 / H37Rv) protein is ESAT-6-like protein EsxK.